Here is a 247-residue protein sequence, read N- to C-terminus: MPRYRLLVEYDGRPYAGFQAQATLPSVQGAIEAAVKAFCGQEVRIAAAGRTDTGVHATGQVVHVDLDKDWPAQTVFNALNAHLTREAVSILSAEVAEEGWHARFSANERRYLYRILNRRAPPALDKGRVWHMKKDLDHEAMHAAAQHLIGLHDFTTFRDMHCQSKSPVKTLDVARVRRVGEEIHLDFEARSFLHRQVRSMTGTLVEVGAGRWTVDDVKAALEARDRRECGPVAPADGLYLVGVGYGD.

Residue Asp-52 is the Nucleophile of the active site. Residue Tyr-111 coordinates substrate.

This sequence belongs to the tRNA pseudouridine synthase TruA family. As to quaternary structure, homodimer.

It catalyses the reaction uridine(38/39/40) in tRNA = pseudouridine(38/39/40) in tRNA. Formation of pseudouridine at positions 38, 39 and 40 in the anticodon stem and loop of transfer RNAs. The chain is tRNA pseudouridine synthase A from Caulobacter vibrioides (strain ATCC 19089 / CIP 103742 / CB 15) (Caulobacter crescentus).